The primary structure comprises 356 residues: tRNA-specific 2-thiouridylase MnmA (356 aa).

Residues 6 to 13 (AMSGGVDS) and L32 contribute to the ATP site. The active-site Nucleophile is C101. An intrachain disulfide couples C101 to C193. Residue G125 participates in ATP binding. The interaction with tRNA stretch occupies residues 143–145 (KDQ). The active-site Cysteine persulfide intermediate is the C193.

Belongs to the MnmA/TRMU family.

It localises to the cytoplasm. It catalyses the reaction S-sulfanyl-L-cysteinyl-[protein] + uridine(34) in tRNA + AH2 + ATP = 2-thiouridine(34) in tRNA + L-cysteinyl-[protein] + A + AMP + diphosphate + H(+). Functionally, catalyzes the 2-thiolation of uridine at the wobble position (U34) of tRNA, leading to the formation of s(2)U34. This Mycolicibacterium smegmatis (strain ATCC 700084 / mc(2)155) (Mycobacterium smegmatis) protein is tRNA-specific 2-thiouridylase MnmA.